Here is a 308-residue protein sequence, read N- to C-terminus: MKPLLCSLLLLSACAGPSEPQASGAGPAQTPPPVTVPMTPPSKKPALSAVQHWGVQLTGYGQTRLNAVHTSPFELVVVDPFDDDGTPWPAAEVRAAAQGRWLIAYLSMGAAESYRSYWQKGWKVGAPAWLLNEDPDWPGNFDVAYWDPAWQAIALAQLDRVIAQGFDGVYMDLIDAYQRHDNRPGARAEMVAWVCKIAAHARAQNPQFVIIPQNAAELIRDPGYAACVDASGNEETYVYAANRPTEAARQRELLASYRLWQQAGKPVFTIEYANQPALMKSAAERARAAGLIPYVGERSLDKLILNQP.

Positions 19 to 43 (EPQASGAGPAQTPPPVTVPMTPPSK) are disordered. Residues 29–43 (QTPPPVTVPMTPPSK) are compositionally biased toward pro residues.

This is an uncharacterized protein from Deinococcus radiodurans (strain ATCC 13939 / DSM 20539 / JCM 16871 / CCUG 27074 / LMG 4051 / NBRC 15346 / NCIMB 9279 / VKM B-1422 / R1).